The following is a 235-amino-acid chain: Urease accessory protein UreF (235 aa).

This sequence belongs to the UreF family. UreD, UreF and UreG form a complex that acts as a GTP-hydrolysis-dependent molecular chaperone, activating the urease apoprotein by helping to assemble the nickel containing metallocenter of UreC. The UreE protein probably delivers the nickel.

The protein localises to the cytoplasm. Its function is as follows. Required for maturation of urease via the functional incorporation of the urease nickel metallocenter. This Psychrobacter cryohalolentis (strain ATCC BAA-1226 / DSM 17306 / VKM B-2378 / K5) protein is Urease accessory protein UreF.